We begin with the raw amino-acid sequence, 80 residues long: U-actitoxin-Avd9a (80 aa).

The N-terminal stretch at 1–20 is a signal peptide; it reads MNLKVLAVFVLCAILVVVTA. Residues 21–39 constitute a propeptide that is removed on maturation; that stretch reads ERRGTETGVYKKDTLQDLI. The 36-residue stretch at 45-80 folds into the ShKT domain; the sequence is CIDRFPTGTCKQVKKGGSCKNSDKYRMNCRKTCGLC. 3 disulfide bridges follow: C45–C80, C54–C73, and C63–C77. Residues 68–69 form a crucial for binding to potassium channels region; sequence KY.

The protein belongs to the sea anemone type 1 potassium channel toxin family. Type 1b subfamily.

It is found in the secreted. Its subcellular location is the nematocyst. Functionally, inhibits voltage-gated potassium channels (Kv1/KCNA). The sequence is that of U-actitoxin-Avd9a from Anemonia viridis (Snakelocks anemone).